The primary structure comprises 269 residues: Histone doublet H2B-H2A (269 aa).

Positions 1–168 (MATQKETTRK…LAGNAARDSK (168 aa)) are histone fold. Positions 210–249 (RKKARKTTEKEASSPKKKAAPKKKKAASKQKKSLSDKELA) are disordered. The segment covering 224–241 (PKKKAAPKKKKAASKQKK) has biased composition (basic residues).

The protein localises to the host nucleus. It localises to the host cytoplasm. The protein resides in the virion. Its function is as follows. Histone-like protein that is recruited to viral factories during viral replication and participates in viral DNA packaging and virion production probably by forming unstable nucleosome-like particles. May compact the viral DNA. The sequence is that of Histone doublet H2B-H2A from Melbournevirus (MelV).